Reading from the N-terminus, the 599-residue chain is Cytadherence high molecular weight protein 3 (599 aa).

Positions 220 to 236 (VQVDSGSQNHSFNNSPS) are enriched in polar residues. Residues 220-241 (VQVDSGSQNHSFNNSPSLKPPL) form a disordered region.

Its subcellular location is the cell projection. It is found in the attachment organelle membrane. Component of the cytoskeleton-like structure which stabilizes the shape of the wall-less mycoplasma. This cytoskeleton-like network of accessory proteins containing HMW proteins 1 to 5 allows the proper anchoring of cytadhesin proteins in the mycoplasmal membrane at the attachment organelle. Essential for successful surface parasitism. The polypeptide is Cytadherence high molecular weight protein 3 (hmw3) (Mycoplasma genitalium (strain ATCC 33530 / DSM 19775 / NCTC 10195 / G37) (Mycoplasmoides genitalium)).